Here is a 639-residue protein sequence, read N- to C-terminus: Phosphatidylinositol 3,4,5-trisphosphate 3-phosphatase cnrN (639 aa).

A Phosphatase tensin-type domain is found at 20 to 190 (FKSKEMDLDL…NYFKEIVSGS (171 aa)). The active-site Phosphocysteine intermediate is the cysteine 129. Residues 195-350 (EFVLTFRSIE…LQMECRFQNN (156 aa)) form the C2 tensin-type domain. Disordered regions lie at residues 243–265 (INND…NNNN), 395–429 (NNIL…HSTP), 451–498 (SSSG…SCSS), 519–567 (NNNN…RKRK), and 598–628 (FTKK…DPSE). 4 stretches are compositionally biased toward low complexity: residues 244 to 265 (NNDN…NNNN), 395 to 424 (NNIL…LPSS), 458 to 486 (NSSR…SRSS), and 519 to 554 (NNNN…SNSN). Positions 598–608 (FTKKINPNNNE) are enriched in polar residues. The span at 619-628 (LKKETNDPSE) shows a compositional bias: basic and acidic residues.

Requires Mg(2+) as cofactor.

It catalyses the reaction a 1,2-diacyl-sn-glycero-3-phospho-(1D-myo-inositol-3,4,5-trisphosphate) + H2O = a 1,2-diacyl-sn-glycero-3-phospho-(1D-myo-inositol-4,5-bisphosphate) + phosphate. In terms of biological role, protein phosphatase that negatively regulates PI3K-dependent pathways. Regulates cAMP signal transduction to control territory size. During development, a lawn of Dictyostelium cells breaks up into territories where cells aggregate in dendritic streams to form groups of 20'000 cells. The sequence is that of Phosphatidylinositol 3,4,5-trisphosphate 3-phosphatase cnrN (cnrN) from Dictyostelium discoideum (Social amoeba).